A 156-amino-acid chain; its full sequence is Homeobox-leucine zipper protein ATHB-52 (156 aa).

Residues 8 to 67 (GKNKKKRLTQDQVRQLEKCFTMNKKLEPDLKLQLSNQLGLPQRQVAVWFQNKRARFKTQS) constitute a DNA-binding region (homeobox). The segment at 68–96 (LEVQHCTLQSKHEAALSDKAKLEHQVQFL) is leucine-zipper.

This sequence belongs to the HD-ZIP homeobox family. Class I subfamily. As to expression, expressed in roots and flowers.

Its subcellular location is the nucleus. Probable transcription factor. This is Homeobox-leucine zipper protein ATHB-52 (ATHB-52) from Arabidopsis thaliana (Mouse-ear cress).